A 285-amino-acid chain; its full sequence is RNA polymerase sigma factor RpoH (285 aa).

The segment at L53–R122 is sigma-70 factor domain-2. The short motif at D77 to Q80 is the Interaction with polymerase core subunit RpoC element. Residues A229–I281 form a sigma-70 factor domain-4 region. The H-T-H motif DNA-binding region spans L254 to K273.

The protein belongs to the sigma-70 factor family. RpoH subfamily. Interacts with the RNA polymerase core enzyme.

The protein resides in the cytoplasm. In terms of biological role, sigma factors are initiation factors that promote the attachment of RNA polymerase to specific initiation sites and are then released. This sigma factor is involved in regulation of expression of heat shock genes. This chain is RNA polymerase sigma factor RpoH, found in Buchnera aphidicola subsp. Schizaphis graminum (strain Sg).